The following is a 286-amino-acid chain: B3 domain-containing protein REM20 (286 aa).

The TF-B3 DNA-binding region spans 9–102; the sequence is PRFFKVFLVE…TFEVSVFDRW (94 aa). Residues 117-161 are disordered; sequence SDSDSDSVVEDEKDSTDVVEDDDDEDEDEDEDDDGSFDEDEEISQ. Residues 119-159 show a composition bias toward acidic residues; it reads SDSDSVVEDEKDSTDVVEDDDDEDEDEDEDDDGSFDEDEEI.

The protein localises to the nucleus. The chain is B3 domain-containing protein REM20 (REM20) from Arabidopsis thaliana (Mouse-ear cress).